The following is a 104-amino-acid chain: Large ribosomal subunit protein uL24 (104 aa).

This sequence belongs to the universal ribosomal protein uL24 family. Part of the 50S ribosomal subunit.

In terms of biological role, one of two assembly initiator proteins, it binds directly to the 5'-end of the 23S rRNA, where it nucleates assembly of the 50S subunit. Its function is as follows. One of the proteins that surrounds the polypeptide exit tunnel on the outside of the subunit. This is Large ribosomal subunit protein uL24 from Shewanella sediminis (strain HAW-EB3).